The primary structure comprises 63 residues: Large ribosomal subunit protein bL28 (63 aa).

The protein belongs to the bacterial ribosomal protein bL28 family.

The sequence is that of Large ribosomal subunit protein bL28 from Clostridium kluyveri (strain NBRC 12016).